The primary structure comprises 263 residues: MPEGPEIRRAADKLVEAVVGKTLTRVWFAFPELKPYETELVGQQVRQIETRGKALLTYFSHDRVLYSHNQLYGVWRVVNAGESPETKRDLRIRLETQDRAILLYSASDIEMLTLDTLTAHPFLQRIGPDVLDLSLTPEQVCERLLLPRFRRRQFSGLLLDQAFLAGLGNYLRVEILWQAQLAPQHTASQLNEEQLQTLSRALLEIPRLSYNTRGTVDENRHHGAIFSFKVFHREGESCERCGGTIERTMLSSRPFYWCPHCQS.

The active-site Schiff-base intermediate with DNA is P2. Catalysis depends on E3, which acts as the Proton donor. Catalysis depends on K53, which acts as the Proton donor; for beta-elimination activity. Positions 70, 125, and 169 each coordinate DNA. Residues 229–263 (KVFHREGESCERCGGTIERTMLSSRPFYWCPHCQS) form an FPG-type zinc finger. The Proton donor; for delta-elimination activity role is filled by R253.

The protein belongs to the FPG family. Requires Zn(2+) as cofactor.

The catalysed reaction is 2'-deoxyribonucleotide-(2'-deoxyribose 5'-phosphate)-2'-deoxyribonucleotide-DNA = a 3'-end 2'-deoxyribonucleotide-(2,3-dehydro-2,3-deoxyribose 5'-phosphate)-DNA + a 5'-end 5'-phospho-2'-deoxyribonucleoside-DNA + H(+). Involved in base excision repair of DNA damaged by oxidation or by mutagenic agents. Acts as a DNA glycosylase that recognizes and removes damaged bases. Has a preference for oxidized pyrimidines, such as thymine glycol, 5,6-dihydrouracil and 5,6-dihydrothymine. Has AP (apurinic/apyrimidinic) lyase activity and introduces nicks in the DNA strand. Cleaves the DNA backbone by beta-delta elimination to generate a single-strand break at the site of the removed base with both 3'- and 5'-phosphates. The polypeptide is Endonuclease 8 (Pectobacterium atrosepticum (strain SCRI 1043 / ATCC BAA-672) (Erwinia carotovora subsp. atroseptica)).